Consider the following 455-residue polypeptide: GTPase Der (455 aa).

EngA-type G domains are found at residues 3–167 and 184–359; these read FTIA…PEPA and IRVA…AVWN. GTP-binding positions include 9–16, 56–60, 119–122, 190–197, 237–241, and 302–305; these read GRPNVGKS, DTAGL, NKSE, GRPNAGKS, and NKWD. A KH-like domain is found at 360–444; that stretch reads RRVATALLNR…PIRITLREKA (85 aa).

The protein belongs to the TRAFAC class TrmE-Era-EngA-EngB-Septin-like GTPase superfamily. EngA (Der) GTPase family. Associates with the 50S ribosomal subunit.

In terms of biological role, GTPase that plays an essential role in the late steps of ribosome biogenesis. This chain is GTPase Der, found in Nitrobacter winogradskyi (strain ATCC 25391 / DSM 10237 / CIP 104748 / NCIMB 11846 / Nb-255).